We begin with the raw amino-acid sequence, 436 residues long: ATP-dependent protease ATPase subunit HslU (436 aa).

ATP is bound by residues valine 18, 60-65 (GVGKTE), aspartate 249, glutamate 314, and arginine 386.

It belongs to the ClpX chaperone family. HslU subfamily. A double ring-shaped homohexamer of HslV is capped on each side by a ring-shaped HslU homohexamer. The assembly of the HslU/HslV complex is dependent on binding of ATP.

Its subcellular location is the cytoplasm. Its function is as follows. ATPase subunit of a proteasome-like degradation complex; this subunit has chaperone activity. The binding of ATP and its subsequent hydrolysis by HslU are essential for unfolding of protein substrates subsequently hydrolyzed by HslV. HslU recognizes the N-terminal part of its protein substrates and unfolds these before they are guided to HslV for hydrolysis. The protein is ATP-dependent protease ATPase subunit HslU of Rhizobium rhizogenes (strain K84 / ATCC BAA-868) (Agrobacterium radiobacter).